We begin with the raw amino-acid sequence, 63 residues long: Sperm protamine P1 (63 aa).

Positions 1–63 (MARYRRHSRS…RYSRRGRRRY (63 aa)) are disordered.

The protein belongs to the protamine P1 family. As to expression, testis.

It is found in the nucleus. The protein resides in the chromosome. Protamines substitute for histones in the chromatin of sperm during the haploid phase of spermatogenesis. They compact sperm DNA into a highly condensed, stable and inactive complex. In Sminthopsis griseoventer (Gray-bellied dunnart), this protein is Sperm protamine P1 (PRM1).